Consider the following 747-residue polypeptide: WD repeat-containing protein 91 (747 aa).

A coiled-coil region spans residues 183 to 227; that stretch reads QRTNQVQEENEVLRQKLFALQAEVHRLKKEEQQQEEAAALVQHKL. Ser-256 is subject to Phosphoserine. Residues 265–278 are compositionally biased toward low complexity; the sequence is LLPQSKKSPSRLSP. The disordered stretch occupies residues 265 to 358; that stretch reads LLPQSKKSPS…SQTQCAEKKL (94 aa). Over residues 283-299 the composition is skewed to polar residues; the sequence is PQAQSSAKKDTFSSQAT. Ser-288 is modified (phosphoserine). Residues 332–343 are compositionally biased toward basic and acidic residues; sequence RLQDHGKERREL. Polar residues predominate over residues 344 to 353; that stretch reads LSTSSSQTQC. WD repeat units follow at residues 406 to 445, 448 to 488, 511 to 555, 560 to 599, 602 to 641, 664 to 702, and 709 to 747; these read EHHS…QTKA, ISKS…NLCE, VCSA…QQLQ, PEPI…CAMS, AHCG…LKVS, VQVP…KVLE, and GHRA…AHKL.

The protein belongs to the WD repeat WDR91 family. In terms of assembly, interacts with WDR81; involved in early to late endosome cargo transport. Interacts with BECN1; negatively regulates the PI3 kinase/PI3K activity associated with endosomal membranes.

It localises to the early endosome membrane. Its subcellular location is the late endosome membrane. Functions as a negative regulator of the PI3 kinase/PI3K activity associated with endosomal membranes via BECN1, a core subunit of the PI3K complex. By modifying the phosphatidylinositol 3-phosphate/PtdInsP3 content of endosomal membranes may regulate endosome fusion, recycling, sorting and early to late endosome transport. It is for instance, required for the delivery of cargos like BST2/tetherin from early to late endosome and thereby participates indirectly to their degradation by the lysosome. May play a role in meiosis. The protein is WD repeat-containing protein 91 of Rattus norvegicus (Rat).